We begin with the raw amino-acid sequence, 589 residues long: 2-succinyl-5-enolpyruvyl-6-hydroxy-3-cyclohexene-1-carboxylate synthase (589 aa).

The disordered stretch occupies residues 198–222 (DAATTEGAHDSHAPSQPTRGPRKLP).

This sequence belongs to the TPP enzyme family. MenD subfamily. As to quaternary structure, homodimer. Mg(2+) serves as cofactor. Requires Mn(2+) as cofactor. The cofactor is thiamine diphosphate.

The enzyme catalyses isochorismate + 2-oxoglutarate + H(+) = 5-enolpyruvoyl-6-hydroxy-2-succinyl-cyclohex-3-ene-1-carboxylate + CO2. Its pathway is quinol/quinone metabolism; 1,4-dihydroxy-2-naphthoate biosynthesis; 1,4-dihydroxy-2-naphthoate from chorismate: step 2/7. It functions in the pathway quinol/quinone metabolism; menaquinone biosynthesis. Functionally, catalyzes the thiamine diphosphate-dependent decarboxylation of 2-oxoglutarate and the subsequent addition of the resulting succinic semialdehyde-thiamine pyrophosphate anion to isochorismate to yield 2-succinyl-5-enolpyruvyl-6-hydroxy-3-cyclohexene-1-carboxylate (SEPHCHC). This is 2-succinyl-5-enolpyruvyl-6-hydroxy-3-cyclohexene-1-carboxylate synthase from Corynebacterium jeikeium (strain K411).